Reading from the N-terminus, the 1401-residue chain is DNA-directed RNA polymerase subunit beta' (1401 aa).

4 residues coordinate Zn(2+): Cys-70, Cys-72, Cys-85, and Cys-88. The Mg(2+) site is built by Asp-460, Asp-462, and Asp-464. Zn(2+)-binding residues include Cys-814, Cys-888, Cys-895, and Cys-898. The disordered stretch occupies residues 1369–1388; that stretch reads RQKQKAVEQEGPSAEQATDN.

It belongs to the RNA polymerase beta' chain family. The RNAP catalytic core consists of 2 alpha, 1 beta, 1 beta' and 1 omega subunit. When a sigma factor is associated with the core the holoenzyme is formed, which can initiate transcription. Mg(2+) is required as a cofactor. It depends on Zn(2+) as a cofactor.

The catalysed reaction is RNA(n) + a ribonucleoside 5'-triphosphate = RNA(n+1) + diphosphate. DNA-dependent RNA polymerase catalyzes the transcription of DNA into RNA using the four ribonucleoside triphosphates as substrates. This Aliivibrio fischeri (strain ATCC 700601 / ES114) (Vibrio fischeri) protein is DNA-directed RNA polymerase subunit beta'.